The primary structure comprises 282 residues: Predicted GPI-anchored protein 23 (282 aa).

Positions 1-18 are cleaved as a signal peptide; the sequence is MRVSTLVLSTSIIPIATA. The tract at residues 163–264 is disordered; that stretch reads GQETSGAGSL…SSNSSSSAGM (102 aa). N-linked (GlcNAc...) asparagine glycosylation is found at N180, N192, and N257. The span at 186 to 216 shows a compositional bias: gly residues; the sequence is GGSGSSNGTSSGSGSGSGAGVGSGSGSGSGS. Over residues 236–264 the composition is skewed to low complexity; it reads LGISSSISQSTTRQLQTSGSSNSSSSAGM. Residue S259 is the site of GPI-anchor amidated serine attachment. A propeptide spans 260–282 (removed in mature form); it reads SSAGMGNVVVGMNAVALAALVLI.

It localises to the cell membrane. Probable cell surface protein involved in the process of adhesion and early events of invasion. This Candida albicans (strain SC5314 / ATCC MYA-2876) (Yeast) protein is Predicted GPI-anchored protein 23 (PGA23).